The chain runs to 241 residues: Cobalt transport protein CbiM (241 aa).

Residues Met-1 to Ala-23 form the signal peptide. 6 helical membrane passes run Gly-29 to Ile-49, Met-66 to Val-86, Leu-98 to Phe-118, Ile-121 to Met-141, Val-160 to Gln-180, and Ile-202 to Phe-222.

Belongs to the CbiM family. In terms of assembly, forms an energy-coupling factor (ECF) transporter complex composed of an ATP-binding protein (A component, CbiO), a transmembrane protein (T component, CbiQ) and 2 possible substrate-capture proteins (S components, CbiM and CbiN) of unknown stoichimetry.

It is found in the cell membrane. The protein operates within cofactor biosynthesis; adenosylcobalamin biosynthesis. Its function is as follows. Part of the energy-coupling factor (ECF) transporter complex CbiMNOQ involved in cobalt import. The sequence is that of Cobalt transport protein CbiM from Clostridium tetani (strain Massachusetts / E88).